An 80-amino-acid polypeptide reads, in one-letter code: Transcription elongation factor 1 homolog (80 aa).

Zn(2+) is bound by residues C25, C28, C49, and C52.

The protein belongs to the ELOF1 family.

It localises to the nucleus. Its function is as follows. Transcription elongation factor implicated in the maintenance of proper chromatin structure in actively transcribed regions. The sequence is that of Transcription elongation factor 1 homolog from Encephalitozoon cuniculi (strain GB-M1) (Microsporidian parasite).